A 176-amino-acid polypeptide reads, in one-letter code: Ribosome maturation factor RimM (176 aa).

A PRC barrel domain is found at 101–174; that stretch reads EGHYYIYQLL…EIRVELPPGL (74 aa).

It belongs to the RimM family. Binds ribosomal protein uS19.

It localises to the cytoplasm. Functionally, an accessory protein needed during the final step in the assembly of 30S ribosomal subunit, possibly for assembly of the head region. Essential for efficient processing of 16S rRNA. May be needed both before and after RbfA during the maturation of 16S rRNA. It has affinity for free ribosomal 30S subunits but not for 70S ribosomes. The chain is Ribosome maturation factor RimM from Moorella thermoacetica (strain ATCC 39073 / JCM 9320).